The sequence spans 217 residues: Peptidyl-tRNA hydrolase (217 aa).

Tyr-14 serves as a coordination point for tRNA. The Proton acceptor role is filled by His-19. Residues Tyr-64, Asn-66, and Asn-113 each contribute to the tRNA site. The disordered stretch occupies residues 182–217 (MNRINAPPPKPKREQKRSSDAPDSSSDTNTSNASDG). A compositionally biased stretch (low complexity) spans 202-217 (APDSSSDTNTSNASDG).

This sequence belongs to the PTH family. In terms of assembly, monomer.

It localises to the cytoplasm. The enzyme catalyses an N-acyl-L-alpha-aminoacyl-tRNA + H2O = an N-acyl-L-amino acid + a tRNA + H(+). In terms of biological role, hydrolyzes ribosome-free peptidyl-tRNAs (with 1 or more amino acids incorporated), which drop off the ribosome during protein synthesis, or as a result of ribosome stalling. Its function is as follows. Catalyzes the release of premature peptidyl moieties from peptidyl-tRNA molecules trapped in stalled 50S ribosomal subunits, and thus maintains levels of free tRNAs and 50S ribosomes. The sequence is that of Peptidyl-tRNA hydrolase from Roseiflexus sp. (strain RS-1).